Here is a 108-residue protein sequence, read N- to C-terminus: MKILLYLFVESENVGKAINALSEGGITGFFLYDYKGMSPQDWQGFLLDEDPEMAIKAVSDLAQNAVLIGTIVSENKLMEIEKLIDEKLADCKYTIIEIPIEGIIVNMP.

It to M.jannaschii MJ1245 and M.thermoautotrophicum MTH1110.

This is an uncharacterized protein from Methanocaldococcus jannaschii (strain ATCC 43067 / DSM 2661 / JAL-1 / JCM 10045 / NBRC 100440) (Methanococcus jannaschii).